An 84-amino-acid polypeptide reads, in one-letter code: Small ribosomal subunit protein eS27-like (84 aa).

Positions 1 to 16 (MPLARDLLHPSLEEEK) are enriched in basic and acidic residues. The segment at 1–23 (MPLARDLLHPSLEEEKKKHKKKR) is disordered. Residues 38–60 (PGCYKITTVFSHAQTVVLCVGCS) form a C4-type zinc finger.

Belongs to the eukaryotic ribosomal protein eS27 family. The cofactor is Zn(2+).

This Mus musculus (Mouse) protein is Small ribosomal subunit protein eS27-like.